A 109-amino-acid chain; its full sequence is MAPKKDKVPPPSSKPAKSGGGKQKKKKWSKGKQKEKVNNMVLFDQATYDKLMSEAPKFKLITPSILSDRLRINGSLARKAIRDLMVKGTIRMVSTHSSQQINTRATCLT.

The tract at residues 1–36 (MAPKKDKVPPPSSKPAKSGGGKQKKKKWSKGKQKEK) is disordered. Residues 22-31 (KQKKKKWSKG) show a composition bias toward basic residues.

This sequence belongs to the eukaryotic ribosomal protein eS25 family.

The chain is Small ribosomal subunit protein eS25z (RPS25A) from Arabidopsis thaliana (Mouse-ear cress).